Reading from the N-terminus, the 433-residue chain is Chitinase-like protein EN03 (433 aa).

Positions 1–16 are cleaved as a signal peptide; it reads MKLFIALVGLLALAKA. The GH18 domain occupies 23–433; it reads SKVLCYYDSR…PILRAAKYRL (411 aa). An intrachain disulfide couples Cys27 to Cys54. A glycan (N-linked (GlcNAc...) asparagine) is linked at Asn220. An intrachain disulfide couples Cys337 to Cys418.

This sequence belongs to the glycosyl hydrolase 18 family. IDGF subfamily.

It localises to the secreted. In Bombyx mori (Silk moth), this protein is Chitinase-like protein EN03.